We begin with the raw amino-acid sequence, 440 residues long: Chitinase-like protein Idgf2 (440 aa).

Positions 1–20 are cleaved as a signal peptide; the sequence is MKAWIWFTFVACLFAASTEA. One can recognise a GH18 domain in the interval 22–440; sequence SNLVCYYDSS…PILRAIKYRL (419 aa). Cysteine 26 and cysteine 53 are oxidised to a cystine. An N-linked (GlcNAc...) asparagine glycan is attached at asparagine 220. Cysteines 342 and 425 form a disulfide.

The protein belongs to the glycosyl hydrolase 18 family. IDGF subfamily. Post-translationally, glycosylated. Primarily expressed in yolk cells and fat body. In larvae, it is expressed in the imaginal ring and weakly expressed in imaginal disks. More strongly expressed than Idgf1 and Idgf3.

Its subcellular location is the secreted. Its function is as follows. Cooperates with insulin-like peptides to stimulate the proliferation, polarization and motility of imaginal disk cells. May act by stabilizing the binding of insulin-like peptides to its receptor through a simultaneous interaction with both molecules to form a multiprotein signaling complex. The chain is Chitinase-like protein Idgf2 (Idgf2) from Drosophila melanogaster (Fruit fly).